Consider the following 176-residue polypeptide: Zinc finger A20 and AN1 domain-containing stress-associated protein 9 (176 aa).

An A20-type zinc finger spans residues 16-50 (ASEPKLCVKGCGFFGSPSNMDLCSKCYRGICAEEA). Zn(2+) is bound by residues cysteine 22, cysteine 26, cysteine 38, cysteine 41, cysteine 117, cysteine 120, cysteine 131, cysteine 133, cysteine 138, histidine 141, histidine 147, and cysteine 149. An AN1-type zinc finger spans residues 111–157 (PARTNRCLCCNKKVGIMGFKCKCGSTFCGEHRYPETHDCSFDFKEVG).

May be involved in environmental stress response. The protein is Zinc finger A20 and AN1 domain-containing stress-associated protein 9 (SAP9) of Arabidopsis thaliana (Mouse-ear cress).